The primary structure comprises 197 residues: Holliday junction resolvase RecU (197 aa).

The tract at residues 1–21 (MVNYPSGVRAGGYPQKKKNQN) is disordered. Mg(2+) is bound by residues Thr-82, Asp-84, Asp-97, and Gln-116.

This sequence belongs to the RecU family. It depends on Mg(2+) as a cofactor.

The protein localises to the cytoplasm. The enzyme catalyses Endonucleolytic cleavage at a junction such as a reciprocal single-stranded crossover between two homologous DNA duplexes (Holliday junction).. Its function is as follows. Endonuclease that resolves Holliday junction intermediates in genetic recombination. Cleaves mobile four-strand junctions by introducing symmetrical nicks in paired strands. Promotes annealing of linear ssDNA with homologous dsDNA. Required for DNA repair, homologous recombination and chromosome segregation. The protein is Holliday junction resolvase RecU of Oenococcus oeni (strain ATCC BAA-331 / PSU-1).